A 205-amino-acid polypeptide reads, in one-letter code: ATP phosphoribosyltransferase (205 aa).

It belongs to the ATP phosphoribosyltransferase family. Short subfamily. Heteromultimer composed of HisG and HisZ subunits.

It is found in the cytoplasm. It carries out the reaction 1-(5-phospho-beta-D-ribosyl)-ATP + diphosphate = 5-phospho-alpha-D-ribose 1-diphosphate + ATP. The protein operates within amino-acid biosynthesis; L-histidine biosynthesis; L-histidine from 5-phospho-alpha-D-ribose 1-diphosphate: step 1/9. Its function is as follows. Catalyzes the condensation of ATP and 5-phosphoribose 1-diphosphate to form N'-(5'-phosphoribosyl)-ATP (PR-ATP). Has a crucial role in the pathway because the rate of histidine biosynthesis seems to be controlled primarily by regulation of HisG enzymatic activity. The chain is ATP phosphoribosyltransferase from Leptospira borgpetersenii serovar Hardjo-bovis (strain JB197).